A 104-amino-acid chain; its full sequence is L-rhamnose mutarotase (104 aa).

Residue Tyr18 coordinates substrate. His22 functions as the Proton donor in the catalytic mechanism. Substrate-binding positions include Tyr41 and 76–77 (WW).

This sequence belongs to the rhamnose mutarotase family. Homodimer.

The protein localises to the cytoplasm. The enzyme catalyses alpha-L-rhamnose = beta-L-rhamnose. It participates in carbohydrate metabolism; L-rhamnose metabolism. Functionally, involved in the anomeric conversion of L-rhamnose. The protein is L-rhamnose mutarotase of Lactiplantibacillus plantarum (strain ATCC BAA-793 / NCIMB 8826 / WCFS1) (Lactobacillus plantarum).